The chain runs to 438 residues: Malic acid transport protein (438 aa).

The next 10 helical transmembrane spans lie at 37–57 (SWFA…SFPF), 65–85 (IGKI…SCML), 106–126 (LFIA…AIYA), 140–160 (ILYY…FFTI), 172–192 (SPAW…AGAV), 205–225 (VIFG…LFAV), 242–262 (PGMF…INIA), 288–308 (FMAI…MVSF), 321–341 (ACGW…TIEI), and 353–373 (FGHI…YLMV). A disordered region spans residues 390–438 (AHPPPKPNTGVLNPTFPPEKAPASLEKVDTHVTSTGGESDPPSSEHESV). Phosphoserine occurs at positions 413, 423, 428, 432, 433, and 437.

This sequence belongs to the tellurite-resistance/dicarboxylate transporter (TDT) family.

The protein localises to the membrane. Functionally, permease for malate and other C4 dicarboxylic acids. This Schizosaccharomyces pombe (strain 972 / ATCC 24843) (Fission yeast) protein is Malic acid transport protein (mae1).